The primary structure comprises 654 residues: tRNA 5-methylaminomethyl-2-thiouridine biosynthesis bifunctional protein MnmC (654 aa).

The segment at 1 to 236 (MSTLLQHAQI…KWEVMHGVYT (236 aa)) is tRNA (mnm(5)s(2)U34)-methyltransferase. The interval 262–654 (IGAGLAGSAT…FALRRLIRGK (393 aa)) is FAD-dependent cmnm(5)s(2)U34 oxidoreductase.

This sequence in the N-terminal section; belongs to the methyltransferase superfamily. tRNA (mnm(5)s(2)U34)-methyltransferase family. It in the C-terminal section; belongs to the DAO family. FAD serves as cofactor.

The protein localises to the cytoplasm. The enzyme catalyses 5-aminomethyl-2-thiouridine(34) in tRNA + S-adenosyl-L-methionine = 5-methylaminomethyl-2-thiouridine(34) in tRNA + S-adenosyl-L-homocysteine + H(+). Functionally, catalyzes the last two steps in the biosynthesis of 5-methylaminomethyl-2-thiouridine (mnm(5)s(2)U) at the wobble position (U34) in tRNA. Catalyzes the FAD-dependent demodification of cmnm(5)s(2)U34 to nm(5)s(2)U34, followed by the transfer of a methyl group from S-adenosyl-L-methionine to nm(5)s(2)U34, to form mnm(5)s(2)U34. The polypeptide is tRNA 5-methylaminomethyl-2-thiouridine biosynthesis bifunctional protein MnmC (Pseudomonas entomophila (strain L48)).